Reading from the N-terminus, the 919-residue chain is Translocase of chloroplast 101, chloroplastic (919 aa).

Disordered stretches follow at residues serine 20–glycine 47 and valine 64–arginine 211. Residues serine 73 to proline 88 show a composition bias toward basic and acidic residues. A compositionally biased stretch (acidic residues) spans phenylalanine 96–lysine 128. The span at glutamine 182 to glycine 207 shows a compositional bias: polar residues. The AIG1-type G domain maps to aspartate 284–arginine 513. The interval glycine 293–serine 300 is G1. Glycine 296–alanine 301 contacts GTP. Serine 300 lines the Mg(2+) pocket. Positions proline 319–lysine 323 are G2. The interval aspartate 340–glycine 343 is G3. Residues threonine 412–serine 415 are G4. Residues histidine 413 and glutamate 461–asparagine 462 contribute to the GTP site. The tract at residues glutamate 461–histidine 463 is G5. 2 disordered regions span residues leucine 540 to glutamate 585 and arginine 611 to aspartate 650. The segment covering glutamate 543 to glutamate 567 has biased composition (acidic residues). Basic and acidic residues predominate over residues leucine 574–glutamate 585. The span at alanine 629–alanine 638 shows a compositional bias: acidic residues. Positions proline 641–aspartate 650 are enriched in low complexity. The chain crosses the membrane as a helical span at residues methionine 893–glycine 914.

Belongs to the TRAFAC class TrmE-Era-EngA-EngB-Septin-like GTPase superfamily. AIG1/Toc34/Toc159-like paraseptin GTPase family. TOC159 subfamily. As to quaternary structure, part of the TOC core complex. Mg(2+) is required as a cofactor.

The protein resides in the plastid. It localises to the chloroplast outer membrane. Functionally, GTPase involved in protein precursor import into chloroplasts. Seems to recognize chloroplast-destined precursor proteins and regulate their presentation to the translocation channel through GTP hydrolysis. Probably specialized in the import of nuclear encoded non-photosynthetic preproteins from the cytoplasm to the chloroplast. The sequence is that of Translocase of chloroplast 101, chloroplastic from Physcomitrium patens (Spreading-leaved earth moss).